Here is a 254-residue protein sequence, read N- to C-terminus: Zinc transporter GufA (254 aa).

A run of 7 helical transmembrane segments spans residues 4–24 (GLVA…PVLV), 74–94 (VAAG…LMPH), 112–132 (ALLF…AVGV), 143–163 (LSVA…VALA), 176–196 (FLAL…VLAL), 198–218 (LSSA…LYVI), and 234–254 (EATT…MSLG). 6 residues coordinate Zn(2+): asparagine 123, glutamate 126, glutamine 152, asparagine 153, glutamate 156, and glutamate 185.

The protein belongs to the ZIP transporter (TC 2.A.5) family. As to quaternary structure, homodimer.

It is found in the cell inner membrane. Mediates the uptake of Zn(2+). The chain is Zinc transporter GufA (gufA) from Myxococcus xanthus.